We begin with the raw amino-acid sequence, 451 residues long: Probable DNA polymerase delta small subunit (451 aa).

The protein belongs to the DNA polymerase delta/II small subunit family. Heterodimer with subunits of 125 kDa and 50 kDa.

It is found in the nucleus. It catalyses the reaction DNA(n) + a 2'-deoxyribonucleoside 5'-triphosphate = DNA(n+1) + diphosphate. In terms of biological role, the function of the small subunit is not yet clear. This Caenorhabditis elegans protein is Probable DNA polymerase delta small subunit.